The sequence spans 438 residues: SPbeta prophage-derived uncharacterized protein YopA (438 aa).

Residues 391-411 (LHVLYLGVWYLELLTLGILGY) traverse the membrane as a helical segment.

The protein resides in the cell membrane. The polypeptide is SPbeta prophage-derived uncharacterized protein YopA (yopA) (Bacillus subtilis (strain 168)).